A 293-amino-acid polypeptide reads, in one-letter code: Ribosomal protein L11 methyltransferase (293 aa).

Positions 145, 166, 188, and 230 each coordinate S-adenosyl-L-methionine.

The protein belongs to the methyltransferase superfamily. PrmA family.

The protein localises to the cytoplasm. The enzyme catalyses L-lysyl-[protein] + 3 S-adenosyl-L-methionine = N(6),N(6),N(6)-trimethyl-L-lysyl-[protein] + 3 S-adenosyl-L-homocysteine + 3 H(+). Its function is as follows. Methylates ribosomal protein L11. The chain is Ribosomal protein L11 methyltransferase from Mannheimia succiniciproducens (strain KCTC 0769BP / MBEL55E).